The primary structure comprises 259 residues: GTP cyclohydrolase FolE2 (259 aa).

This sequence belongs to the GTP cyclohydrolase IV family.

It carries out the reaction GTP + H2O = 7,8-dihydroneopterin 3'-triphosphate + formate + H(+). Its pathway is cofactor biosynthesis; 7,8-dihydroneopterin triphosphate biosynthesis; 7,8-dihydroneopterin triphosphate from GTP: step 1/1. Converts GTP to 7,8-dihydroneopterin triphosphate. The protein is GTP cyclohydrolase FolE2 of Thermotoga neapolitana (strain ATCC 49049 / DSM 4359 / NBRC 107923 / NS-E).